The following is a 737-amino-acid chain: MSGPCSAHRVPPIGPRPTIRSPRITRSSRMTEPKRPSRRGTTRTRPAPDSVGDDNPYLDAPASRASSESRSESGSGLSAEGSGSDAPRPRRPRQPRRPAADAESAPTAADTNDSAPAPTARRGVRRTTRSAAAGTDVSSSTSELPRAESPRSEPRTESRPEPRAENGSETRHESRGGSSEGRPSFRDPSPSGYEASMERPLADRPDAPNRYDRAFDRTDGPERQDTRPERPFQQERPFQQDRQDRHERQDRPDRRDRNGRRRGRGGRPDNRGPGGDRHQSTGPAADRSHDRGPDRNNERAFDRPERPDRQGESSDRFDSQDRGGNRQRNGRRGRNRFRRGAGGNESAPISGSHAPSQGSPSAPIGVEGTMAGWFDPSRDGGFLRRPENSYLPDPTDPFMPPALVRLHQLRRGDRLEVTYGRDHRGRYLVIEVQTLNDGSPVVLEKRPDFNTLVASYPDRKLTLETGRPAKTGPELTRRAIDLIAPIGYGQRALIVAPARAGKTTLLQAIVEGVSINHPEAVLLVLLVDERPEEVSEMITWGYGEVVASSFDMPPKRHVEVAEMTLERARRLVEQGKDVVIVLDSITRLARAHNTVDRGTGRTMSGGLDATAMQKPKAFFGSARMIAPQHGGGSLTIIATALVETGSRMDDVIFEEFKGTGNCEIKLDRSLADRRIFPAFDIATSGTRREEKLYRPDQLEKVHLLRRGLHQLPPQAGMEWLIKRIAATTNNDSLLDGL.

The segment at 1–396 (MSGPCSAHRV…ENSYLPDPTD (396 aa)) is disordered. 3 stretches are compositionally biased toward low complexity: residues 16–28 (RPTI…TRSS), 62–86 (ASRA…GSDA), and 101–111 (DAESAPTAADT). Composition is skewed to basic and acidic residues over residues 145-175 (PRAE…HESR), 196-256 (SMER…DRRD), 266-279 (GRPD…DRHQ), and 286-324 (DRSH…DRGG). Residues 328 to 339 (RNGRRGRNRFRR) are compositionally biased toward basic residues. The span at 347 to 360 (APISGSHAPSQGSP) shows a compositional bias: polar residues. Residues 367–439 (EGTMAGWFDP…IEVQTLNDGS (73 aa)) enclose the Rho RNA-BD domain. Positions 376-387 (PSRDGGFLRRPE) are enriched in basic and acidic residues. Residues 487–492 (GYGQRA), 499–504 (RAGKTT), and arginine 530 contribute to the ATP site.

It belongs to the Rho family. In terms of assembly, homohexamer. The homohexamer assembles into an open ring structure.

Facilitates transcription termination by a mechanism that involves Rho binding to the nascent RNA, activation of Rho's RNA-dependent ATPase activity, and release of the mRNA from the DNA template. This is Transcription termination factor Rho from Gemmatimonas aurantiaca (strain DSM 14586 / JCM 11422 / NBRC 100505 / T-27).